Here is a 95-residue protein sequence, read N- to C-terminus: Large ribosomal subunit protein uL23 (95 aa).

The protein belongs to the universal ribosomal protein uL23 family. In terms of assembly, part of the 50S ribosomal subunit. Contacts protein L29, and trigger factor when it is bound to the ribosome.

One of the early assembly proteins it binds 23S rRNA. One of the proteins that surrounds the polypeptide exit tunnel on the outside of the ribosome. Forms the main docking site for trigger factor binding to the ribosome. The chain is Large ribosomal subunit protein uL23 from Geobacillus thermodenitrificans (strain NG80-2).